The sequence spans 398 residues: MKQLTILGSTGSVGTSTLAVVRENPDRFAIKALVAGRNVAVMAQQCIEFRPAYAAMADEGAARELRILLAENGIATEVMAGEQAACELAALDDVDQVTAAIVGAAGLLPTLAAIRAGKQVLLANKESLVTCGRLFMDAVQQSKTQLLPLDSEHNAIFQSLPESIQRQLGYSSLESHGVSRIVLTGSGGPFRTTPLEQFTAMTPDQACAHPNWSMGRKISVDSATMMNKGLEYIEARWLFNASAEQMEVILHPQSVIHSMVRYTDGSVLAQLGTPDMRTPIAHAMAYPQRVNSGVEALDFCRIGSLTFAEPERERYPCLYLAIEAFDAGQAATTALNAANEVAVAAFLQEQIRFTDIAAVNQKVVERLSLQEPSCIDAVLEIDRQAREVAVGLVKSLHN.

NADPH contacts are provided by threonine 10, glycine 11, serine 12, valine 13, glycine 36, arginine 37, asparagine 38, and asparagine 124. A 1-deoxy-D-xylulose 5-phosphate-binding site is contributed by lysine 125. Glutamate 126 contributes to the NADPH binding site. Aspartate 150 serves as a coordination point for Mn(2+). 1-deoxy-D-xylulose 5-phosphate-binding residues include serine 151, glutamate 152, serine 186, and histidine 209. Glutamate 152 lines the Mn(2+) pocket. Glycine 215 provides a ligand contact to NADPH. Positions 222, 227, 228, and 231 each coordinate 1-deoxy-D-xylulose 5-phosphate. Mn(2+) is bound at residue glutamate 231.

The protein belongs to the DXR family. As to quaternary structure, homodimer. Mg(2+) serves as cofactor. Requires Mn(2+) as cofactor.

It catalyses the reaction 2-C-methyl-D-erythritol 4-phosphate + NADP(+) = 1-deoxy-D-xylulose 5-phosphate + NADPH + H(+). It functions in the pathway isoprenoid biosynthesis; isopentenyl diphosphate biosynthesis via DXP pathway; isopentenyl diphosphate from 1-deoxy-D-xylulose 5-phosphate: step 1/6. Its function is as follows. Catalyzes the NADPH-dependent rearrangement and reduction of 1-deoxy-D-xylulose-5-phosphate (DXP) to 2-C-methyl-D-erythritol 4-phosphate (MEP). In Serratia proteamaculans (strain 568), this protein is 1-deoxy-D-xylulose 5-phosphate reductoisomerase.